A 925-amino-acid chain; its full sequence is Glutamate receptor 3.1 (925 aa).

The N-terminal stretch at 1–25 (MLSSMNWVLLSFIIVLGGGLLLSEG) is a signal peptide. Over 26 to 591 (ASSSRPPVIK…NPWAFLRPFT (566 aa)) the chain is Extracellular. N-linked (GlcNAc...) asparagine glycans are attached at residues Asn-309, Asn-341, Asn-359, Asn-419, Asn-437, and Asn-488. The helical transmembrane segment at 592–612 (LPMWAVTASFFVIVGAAIWIL) threads the bilayer. Over 613 to 621 (EHRINDEFR) the chain is Cytoplasmic. A helical membrane pass occupies residues 622–642 (GPPRRQIITILWFTFSTMFFS). Topologically, residues 643–653 (HRETTVSTLGR) are cytoplasmic. Residues 654–674 (MVLLIWLFVVLIITSSYTASL) form a helical membrane-spanning segment. At 675–831 (TSILTVQQLN…GDSEQLNVHS (157 aa)) the chain is on the extracellular side. 2 N-linked (GlcNAc...) asparagine glycosylation sites follow: Asn-738 and Asn-812. The chain crosses the membrane as a helical span at residues 832 to 852 (FWGMFLVVGIACLVALFIHFF). Topologically, residues 853–925 (KIIRDFCKDT…ISRTASRRPI (73 aa)) are cytoplasmic. The tract at residues 897-925 (KRRLKRKRNNDHSMNANSIISRTASRRPI) is disordered. The span at 908–919 (HSMNANSIISRT) shows a compositional bias: polar residues.

Belongs to the glutamate-gated ion channel (TC 1.A.10.1) family. May form heteromers. As to expression, expressed predominantly in roots. Firt detected in the vascular tissues of the cotyledons, and later in the vasculature of all organs. In leaves, preferentially expressed in guard cells.

It localises to the membrane. Glutamate-gated receptor that probably acts as a non-selective cation channel. May be involved in light-signal transduction and calcium homeostasis via the regulation of calcium influx into cells. Required for the long-term calcium oscillation-regulated stomatal movements. In Arabidopsis thaliana (Mouse-ear cress), this protein is Glutamate receptor 3.1 (GLR3.1).